The chain runs to 59 residues: uncharacterized protein (59 aa).

This is an uncharacterized protein from Treponema pallidum (strain Nichols).